Consider the following 249-residue polypeptide: Secreted flagellin C (249 aa).

Interacts with FliS.

Its subcellular location is the secreted. In terms of biological role, might play a role in virulence. This Campylobacter jejuni subsp. jejuni serotype O:6 (strain 81116 / NCTC 11828) protein is Secreted flagellin C (flaC).